The sequence spans 376 residues: Erythronate-4-phosphate dehydrogenase (376 aa).

2 residues coordinate substrate: serine 45 and threonine 67. Aspartate 147 serves as a coordination point for NAD(+). Residue arginine 209 is part of the active site. Residue aspartate 233 participates in NAD(+) binding. Residue glutamate 238 is part of the active site. Catalysis depends on histidine 255, which acts as the Proton donor. Position 258 (glycine 258) interacts with NAD(+). Tyrosine 259 lines the substrate pocket.

This sequence belongs to the D-isomer specific 2-hydroxyacid dehydrogenase family. PdxB subfamily. In terms of assembly, homodimer.

The protein localises to the cytoplasm. It carries out the reaction 4-phospho-D-erythronate + NAD(+) = (R)-3-hydroxy-2-oxo-4-phosphooxybutanoate + NADH + H(+). The protein operates within cofactor biosynthesis; pyridoxine 5'-phosphate biosynthesis; pyridoxine 5'-phosphate from D-erythrose 4-phosphate: step 2/5. In terms of biological role, catalyzes the oxidation of erythronate-4-phosphate to 3-hydroxy-2-oxo-4-phosphonooxybutanoate. This Shewanella baltica (strain OS223) protein is Erythronate-4-phosphate dehydrogenase.